Here is a 442-residue protein sequence, read N- to C-terminus: Ribosomal protein uS12 methylthiotransferase RimO (442 aa).

The MTTase N-terminal domain occupies 9-119 (PRIGFVSLGC…VLSHVHQYVP (111 aa)). Residues cysteine 18, cysteine 54, cysteine 83, cysteine 151, cysteine 155, and cysteine 158 each coordinate [4Fe-4S] cluster. One can recognise a Radical SAM core domain in the interval 137-375 (LTPRHYAYLK…QLQQAISTQR (239 aa)). The TRAM domain occupies 377–442 (QDKIGREVLV…DEYDLWGSRV (66 aa)).

This sequence belongs to the methylthiotransferase family. RimO subfamily. Requires [4Fe-4S] cluster as cofactor.

It localises to the cytoplasm. It catalyses the reaction L-aspartate(89)-[ribosomal protein uS12]-hydrogen + (sulfur carrier)-SH + AH2 + 2 S-adenosyl-L-methionine = 3-methylsulfanyl-L-aspartate(89)-[ribosomal protein uS12]-hydrogen + (sulfur carrier)-H + 5'-deoxyadenosine + L-methionine + A + S-adenosyl-L-homocysteine + 2 H(+). Functionally, catalyzes the methylthiolation of an aspartic acid residue of ribosomal protein uS12. This Pectobacterium atrosepticum (strain SCRI 1043 / ATCC BAA-672) (Erwinia carotovora subsp. atroseptica) protein is Ribosomal protein uS12 methylthiotransferase RimO.